A 314-amino-acid chain; its full sequence is Oxidoreductase poxI (314 aa).

It belongs to the NmrA-type oxidoreductase family. Isoflavone reductase subfamily.

The protein operates within secondary metabolite biosynthesis. Oxidoreductase; part of the gene cluster that mediates the biosynthesis of oxaleimides, cytotoxic compounds containing an unusual disubstituted succinimide moiety. The first step of the pathway is provided by the HR-PKS poxF that serves in a new mode of collaborative biosynthesis with the PKS-NRPS poxE, by providing the olefin containing amino acid substrate via the synthesis of an ACP-bound dec-4-enoate. The cytochrome P450 monooxygenase poxM-catalyzed oxidation at the alpha-position creates the enzyme-bound 2-hydroxydec-4-enoyl-ACP thioester, which may be prone to spontaneous hydrolysis to yield 2-hydroxydec-4-enoic acid due to increased electrophilicity of the carbonyl. 2-hydroxydec-4-enoic acid can then be further oxidized by poxM to yield the alpha-ketoacid 2-oxodec-4-enoicacid, which is reductively aminated by the aminotransferase poxL to yield (S,E)-2-aminodec-4-enoic acid. The Hybrid PKS-NRPS synthetase poxE then performs condensation between the octaketide product of its PKS modules and the amino group of (S,E)-2-aminodec-4-enoic acid which is activated and incorporated by the adenylation domain. The resulting aminoacyl product can be cyclized by the Diels-Alderase PoxQ and reductively released by the reductive (R) domain of poxE to yield an aldehyde intermediate. The released aldehyde is then substrate for a Knoevenagel condensation by the hydrolyase poxO followed by an oxidation at the 5-position of the pyrrolidone ring. The presence of the olefin from the amino acid building block allows for migration of the substituted allyl group to occur. This allylic transposition reaction takes place in a conjugate addition, semipinacol-like fashion to yield a succinimide intermediate. Iterative two-electron oxidations of the C7 methyl of the succinimide intermediate to the carboxylic acid can be catalyzed by one of two remaining cytochrome P450 monooxygenasess poxC or poxD to yield oxaleimide A. Subsequent oxidation yields the maleimide scaffold oxaleimide I. Both oxaleimide A and oxaleimide I can undergo oxidative modifications in the decalin ring to yield the series of products oxaleimides B to H. This chain is Oxidoreductase poxI, found in Penicillium oxalicum (strain 114-2 / CGMCC 5302) (Penicillium decumbens).